A 1400-amino-acid chain; its full sequence is DNA-directed RNA polymerase subunit beta' (1400 aa).

Cys70, Cys72, Cys85, and Cys88 together coordinate Zn(2+). Mg(2+) is bound by residues Asp460, Asp462, and Asp464. Cys814, Cys888, Cys895, and Cys898 together coordinate Zn(2+).

It belongs to the RNA polymerase beta' chain family. In terms of assembly, the RNAP catalytic core consists of 2 alpha, 1 beta, 1 beta' and 1 omega subunit. When a sigma factor is associated with the core the holoenzyme is formed, which can initiate transcription. Mg(2+) is required as a cofactor. Requires Zn(2+) as cofactor.

The enzyme catalyses RNA(n) + a ribonucleoside 5'-triphosphate = RNA(n+1) + diphosphate. In terms of biological role, DNA-dependent RNA polymerase catalyzes the transcription of DNA into RNA using the four ribonucleoside triphosphates as substrates. This chain is DNA-directed RNA polymerase subunit beta', found in Vibrio vulnificus (strain CMCP6).